A 51-amino-acid polypeptide reads, in one-letter code: Ovomucoid (51 aa).

The region spanning 3-51 is the Kazal-like domain; the sequence is IDCSGYPKPACTLEFFPLCGSDNQTYSNKCAFCNAAVEKNVTLNHIGEC. Cystine bridges form between C5–C35, C13–C32, and C21–C51. N-linked (GlcNAc...) asparagine glycosylation is present at N42.

Its subcellular location is the secreted. This chain is Ovomucoid, found in Eudromia elegans (Elegant crested-tinamou).